A 472-amino-acid polypeptide reads, in one-letter code: MKFLIFAFFGGVHLLSLCSGKAIYKNGISKRTFEEIKEEIASYGDVAKAIINLAVYGKAQNRSYERLALLVDTVGPRLSGSKNLEKAIQIMYQNLQQDELENVHLEPGRIPHWERGEESAVMLEPRIHKIAILGLGSSIGTPPEGITAEVLVVTSFDELQRRASEARGKIVVYNQPYINYSRTVQYRTQGAVEAAKVGALASLIRSVASFSIYSPHTGIQEYQDGVPRIPTACITVEDAEMMSRMASRGIRIVIQLKMGAKTYPDTDSFNTVAEITGSKYPEQVVLVSGHLDSWDVGQGAMDDGGGAFISWEALSLIKDLGLRPKRTLRLVLWTAEEQGGVGAFQYYQLHKVNISNYSLVMESDTGTFLPTGLQFTGSEKARAVMEEVMSLLQPLNVTQVLSHGEGTDINFWIKAGVPGASLLDDLYKYFFFHHSHGDTMTVMDPKQMNVAAAVWAVVSYVVADMEEMLPRS.

Residues 1 to 20 (MKFLIFAFFGGVHLLSLCSG) form the signal peptide. Residues 21 to 44 (KAIYKNGISKRTFEEIKEEIASYG) constitute a propeptide that is removed on maturation. Residues Asn61 and Asn179 are each glycosylated (N-linked (GlcNAc...) asparagine). The Zn(2+) site is built by His290 and Asp302. Glu336 (nucleophile) is an active-site residue. Glu337 is a Zn(2+) binding site. Residues Asn353 and Asn356 are each glycosylated (N-linked (GlcNAc...) asparagine). Asp364 serves as a coordination point for Zn(2+). Asn396 carries an N-linked (GlcNAc...) asparagine glycan. His434 is a binding site for Zn(2+).

The protein belongs to the peptidase M28 family. In terms of assembly, homodimer. The monomeric form is inactive while the homodimer is active. Post-translationally, N-glycosylated. The secreted form is modified by hybrid or complex type oligosaccharide chains.

It is found in the endoplasmic reticulum. Its subcellular location is the golgi apparatus. It localises to the lysosome. The protein resides in the secreted. Functionally, carboxypeptidase that may play an important role in the hydrolysis of circulating peptides. Catalyzes the hydrolysis of dipeptides with unsubstituted terminals into amino acids. May play a role in the liberation of thyroxine hormone from its thyroglobulin (Tg) precursor. This is Carboxypeptidase Q (CPQ) from Pongo abelii (Sumatran orangutan).